Consider the following 614-residue polypeptide: BPI fold-containing family B member 4 (614 aa).

The first 18 residues, 1 to 18 (MWMAWCVAALSVVAVCGT), serve as a signal peptide directing secretion. N-linked (GlcNAc...) asparagine glycosylation is present at Asn-273. Cys-295 and Cys-332 are oxidised to a cystine.

Belongs to the BPI/LBP/Plunc superfamily. BPI/LBP family. Expressed in nasal tissue.

Its subcellular location is the secreted. It localises to the cytoplasm. In terms of biological role, may have the capacity to recognize and bind specific classes of odorants. May act as a carrier molecule, transporting odorants across the mucus layer to access receptor sites. May serve as a primary defense mechanism by recognizing and removing potentially harmful odorants or pathogenic microorganisms from the mucosa or clearing excess odorant from mucus to enable new odorant stimuli to be received. This chain is BPI fold-containing family B member 4 (BPIFB4), found in Homo sapiens (Human).